We begin with the raw amino-acid sequence, 295 residues long: Ribosomal protein L11 methyltransferase (295 aa).

The S-adenosyl-L-methionine site is built by T150, G171, D193, and N232.

The protein belongs to the methyltransferase superfamily. PrmA family.

It localises to the cytoplasm. It catalyses the reaction L-lysyl-[protein] + 3 S-adenosyl-L-methionine = N(6),N(6),N(6)-trimethyl-L-lysyl-[protein] + 3 S-adenosyl-L-homocysteine + 3 H(+). Its function is as follows. Methylates ribosomal protein L11. The sequence is that of Ribosomal protein L11 methyltransferase from Neisseria meningitidis serogroup A / serotype 4A (strain DSM 15465 / Z2491).